The chain runs to 326 residues: tRNA U34 carboxymethyltransferase (326 aa).

7 residues coordinate carboxy-S-adenosyl-L-methionine: Lys-91, Trp-105, Lys-110, Gly-130, Met-196, Tyr-200, and Arg-315.

Belongs to the class I-like SAM-binding methyltransferase superfamily. CmoB family. As to quaternary structure, homotetramer.

It catalyses the reaction carboxy-S-adenosyl-L-methionine + 5-hydroxyuridine(34) in tRNA = 5-carboxymethoxyuridine(34) in tRNA + S-adenosyl-L-homocysteine + H(+). In terms of biological role, catalyzes carboxymethyl transfer from carboxy-S-adenosyl-L-methionine (Cx-SAM) to 5-hydroxyuridine (ho5U) to form 5-carboxymethoxyuridine (cmo5U) at position 34 in tRNAs. The polypeptide is tRNA U34 carboxymethyltransferase (Tolumonas auensis (strain DSM 9187 / NBRC 110442 / TA 4)).